Here is a 255-residue protein sequence, read N- to C-terminus: Fasciclin-like arabinogalactan protein 14 (255 aa).

Positions 1–23 are cleaved as a signal peptide; that stretch reads MSSSLTIFFFFFASTFLYTSSNS. One can recognise an FAS1 domain in the interval 24 to 169; it reads FNITNILNEH…ISVLHISSAI (146 aa). Asn-25, Asn-99, Asn-125, and Asn-159 each carry an N-linked (GlcNAc...) asparagine glycan. The interval 179-231 is disordered; that stretch reads PTASPLSPVSSPPRPAESPNDDGQDFDEPPSSAPGAAADEPSENAGSANGVSR. Residues 197–206 are compositionally biased toward acidic residues; that stretch reads PNDDGQDFDE. Positions 222–231 are enriched in polar residues; it reads NAGSANGVSR. A lipid anchor (GPI-anchor amidated serine) is attached at Ser-225. The propeptide at 226–255 is removed in mature form; sequence ANGVSRNDSQPAFAFTLLMSFIWWFMARLR.

It belongs to the fasciclin-like AGP family.

It is found in the cell membrane. In terms of biological role, may be a cell surface adhesion protein. This Arabidopsis thaliana (Mouse-ear cress) protein is Fasciclin-like arabinogalactan protein 14 (FLA14).